A 489-amino-acid polypeptide reads, in one-letter code: Protein LMBR1L (489 aa).

Residues Met1–Arg21 are Extracellular-facing. The interval Met1–Thr59 is interaction with LGB. The tract at residues Met1 to Leu76 is LCN1-binding. The helical transmembrane segment at Glu22–Thr42 threads the bilayer. Over Arg43–Glu66 the chain is Cytoplasmic. Residues Leu67–Ile87 traverse the membrane as a helical segment. Residues Ser88–Asn114 lie on the Extracellular side of the membrane. A helical transmembrane segment spans residues Leu115–Thr135. The Cytoplasmic portion of the chain corresponds to Glu136–Thr154. A helical transmembrane segment spans residues Val155–Ile175. The Extracellular segment spans residues Val176–Tyr196. A helical transmembrane segment spans residues Leu197–Leu217. The Cytoplasmic segment spans residues Ala218 to Cys305. A helical transmembrane segment spans residues Leu306–Ile326. The Extracellular portion of the chain corresponds to Asp327–Ser350. A helical transmembrane segment spans residues Phe351–Phe371. Residues Tyr372–Ala388 lie on the Cytoplasmic side of the membrane. A helical membrane pass occupies residues Met389–Phe409. Over Ser410–Gly431 the chain is Extracellular. Residues Asn432–Val452 form a helical membrane-spanning segment. Over Lys453–Gln489 the chain is Cytoplasmic.

The protein belongs to the LIMR family. In terms of assembly, dimer. Can also form higher oligomers. Interacts with LCN1; this interaction mediates the endocytosis of LCN1. Interacts with UBAC2, FAF2, VCP, AMFR, ZNRF3, CTNNB1, LRP6, GSK3A, GSK3B, FZD6, DVL2 and RNF43. Interaction with LGB and SCGB1A1 is controversial.

Its subcellular location is the cell membrane. The protein resides in the endoplasmic reticulum membrane. Functionally, plays an essential role in lymphocyte development by negatively regulating the canonical Wnt signaling pathway. In association with UBAC2 and E3 ubiquitin-protein ligase AMFR, promotes the ubiquitin-mediated degradation of CTNNB1 and Wnt receptors FZD6 and LRP6. LMBR1L stabilizes the beta-catenin destruction complex that is required for regulating CTNNB1 levels. Acts as a LCN1 receptor and can mediate its endocytosis. The chain is Protein LMBR1L (LMBR1L) from Macaca fascicularis (Crab-eating macaque).